We begin with the raw amino-acid sequence, 432 residues long: Serine/threonine-protein kinase Sgk1 (432 aa).

Positions 67 to 93 (PELMNANPSPPPSPSQQINLGPSSNPH) are disordered. The segment covering 82–92 (QQINLGPSSNP) has biased composition (polar residues). In terms of domain architecture, Protein kinase spans 99 to 356 (FHFLKVIGKG…FTEIKNHIFF (258 aa)). ATP-binding positions include 105 to 113 (IGKGSFGKV) and Lys128. The active-site Proton acceptor is Asp223. The region spanning 357-432 (SPINWDDLIN…SYAPPVDSFL (76 aa)) is the AGC-kinase C-terminal domain.

Belongs to the protein kinase superfamily. AGC Ser/Thr protein kinase family.

Its subcellular location is the cytoplasm. The protein resides in the nucleus. The protein localises to the endoplasmic reticulum. The catalysed reaction is L-seryl-[protein] + ATP = O-phospho-L-seryl-[protein] + ADP + H(+). It catalyses the reaction L-threonyl-[protein] + ATP = O-phospho-L-threonyl-[protein] + ADP + H(+). In terms of biological role, protein kinase that may play an important role in cellular stress response. May be involved in the regulation of processes such as cell survival, neuronal excitability and renal sodium excretion. The chain is Serine/threonine-protein kinase Sgk1 (SGK1) from Gallus gallus (Chicken).